The sequence spans 466 residues: Ribulose bisphosphate carboxylase large chain (466 aa).

K5 is subject to N6,N6,N6-trimethyllysine. Substrate is bound by residues N114 and T164. The Proton acceptor role is filled by K166. K168 is a substrate binding site. Positions 192, 194, and 195 each coordinate Mg(2+). Residue K192 is modified to N6-carboxylysine. The active-site Proton acceptor is H285. Substrate contacts are provided by R286, H318, and S370.

It belongs to the RuBisCO large chain family. Type I subfamily. In terms of assembly, heterohexadecamer of 8 large chains and 8 small chains; disulfide-linked. The disulfide link is formed within the large subunit homodimers. Mg(2+) is required as a cofactor. The disulfide bond which can form in the large chain dimeric partners within the hexadecamer appears to be associated with oxidative stress and protein turnover.

The protein localises to the plastid. The protein resides in the chloroplast. It catalyses the reaction 2 (2R)-3-phosphoglycerate + 2 H(+) = D-ribulose 1,5-bisphosphate + CO2 + H2O. The catalysed reaction is D-ribulose 1,5-bisphosphate + O2 = 2-phosphoglycolate + (2R)-3-phosphoglycerate + 2 H(+). RuBisCO catalyzes two reactions: the carboxylation of D-ribulose 1,5-bisphosphate, the primary event in carbon dioxide fixation, as well as the oxidative fragmentation of the pentose substrate in the photorespiration process. Both reactions occur simultaneously and in competition at the same active site. The protein is Ribulose bisphosphate carboxylase large chain of Vitis aestivalis (Grape).